The sequence spans 248 residues: Meiotically up-regulated gene 65 protein (248 aa).

In terms of biological role, has a role in meiosis. This is Meiotically up-regulated gene 65 protein (mug65) from Schizosaccharomyces pombe (strain 972 / ATCC 24843) (Fission yeast).